Consider the following 428-residue polypeptide: Kynureninase (428 aa).

Residues Thr-104, Thr-105, 132–135 (FPSD), Asp-213, His-216, and Tyr-238 each bind pyridoxal 5'-phosphate. Lys-239 bears the N6-(pyridoxal phosphate)lysine mark. Pyridoxal 5'-phosphate-binding residues include Trp-267 and Thr-295.

It belongs to the kynureninase family. As to quaternary structure, homodimer. The cofactor is pyridoxal 5'-phosphate.

The catalysed reaction is L-kynurenine + H2O = anthranilate + L-alanine + H(+). It carries out the reaction 3-hydroxy-L-kynurenine + H2O = 3-hydroxyanthranilate + L-alanine + H(+). It functions in the pathway amino-acid degradation; L-kynurenine degradation; L-alanine and anthranilate from L-kynurenine: step 1/1. It participates in cofactor biosynthesis; NAD(+) biosynthesis; quinolinate from L-kynurenine: step 2/3. Its function is as follows. Catalyzes the cleavage of L-kynurenine (L-Kyn) and L-3-hydroxykynurenine (L-3OHKyn) into anthranilic acid (AA) and 3-hydroxyanthranilic acid (3-OHAA), respectively. The protein is Kynureninase of Bacillus thuringiensis subsp. konkukian (strain 97-27).